Reading from the N-terminus, the 276-residue chain is Ribosomal RNA small subunit methyltransferase J (276 aa).

Residues 135 to 136 (ER) and Asp-191 contribute to the S-adenosyl-L-methionine site.

It belongs to the methyltransferase superfamily. RsmJ family.

It localises to the cytoplasm. It carries out the reaction guanosine(1516) in 16S rRNA + S-adenosyl-L-methionine = N(2)-methylguanosine(1516) in 16S rRNA + S-adenosyl-L-homocysteine + H(+). Specifically methylates the guanosine in position 1516 of 16S rRNA. This is Ribosomal RNA small subunit methyltransferase J from Hydrogenovibrio crunogenus (strain DSM 25203 / XCL-2) (Thiomicrospira crunogena).